The following is an 82-amino-acid chain: Sigma-G-dependent sporulation-specific SASP protein (82 aa).

The polypeptide is Sigma-G-dependent sporulation-specific SASP protein (Bacillus subtilis (strain 168)).